The primary structure comprises 887 residues: Integrator complex subunit 6 (887 aa).

A VWFA domain is found at 3–227; the sequence is ILLFLIDTSA…QCLESLVQKV (225 aa). Positions 626-633 match the Inhibitory loop motif; that stretch reads MMIDEADE. Serine 804 carries the phosphoserine modification.

The protein belongs to the Integrator subunit 6 family. Component of the Integrator complex, composed of core subunits INTS1, INTS2, INTS3, INTS4, INTS5, INTS6, INTS7, INTS8, INTS9/RC74, INTS10, INTS11/CPSF3L, INTS12, INTS13, INTS14 and INTS15. The core complex associates with protein phosphatase 2A subunits PPP2CA and PPP2R1A, to form the Integrator-PP2A (INTAC) complex. As to expression, widely expressed. Expressed in heart, brain, placenta, lung, liver, skeletal muscle, kidney and pancreas.

Its subcellular location is the nucleus. It is found in the chromosome. Its function is as follows. Component of the integrator complex, a multiprotein complex that terminates RNA polymerase II (Pol II) transcription in the promoter-proximal region of genes. The integrator complex provides a quality checkpoint during transcription elongation by driving premature transcription termination of transcripts that are unfavorably configured for transcriptional elongation: the complex terminates transcription by (1) catalyzing dephosphorylation of the C-terminal domain (CTD) of Pol II subunit POLR2A and SUPT5H/SPT5, (2) degrading the exiting nascent RNA transcript via endonuclease activity and (3) promoting the release of Pol II from bound DNA. The integrator complex is also involved in terminating the synthesis of non-coding Pol II transcripts, such as enhancer RNAs (eRNAs), small nuclear RNAs (snRNAs), telomerase RNAs and long non-coding RNAs (lncRNAs). Within the integrator complex, INTS6 acts as a molecular adapter that promotes assembly of protein phosphatase 2A (PP2A) subunits to the integrator core complex, promoting recruitment of PP2A to transcription pause-release checkpoint. Mediates recruitment of cytoplasmic dynein to the nuclear envelope, probably as component of the integrator complex. May have a tumor suppressor role; an ectopic expression suppressing tumor cell growth. The polypeptide is Integrator complex subunit 6 (Homo sapiens (Human)).